Here is a 451-residue protein sequence, read N- to C-terminus: UPF0210 protein APL_1491 (451 aa).

This sequence belongs to the UPF0210 family. As to quaternary structure, homodimer.

The protein is UPF0210 protein APL_1491 of Actinobacillus pleuropneumoniae serotype 5b (strain L20).